The primary structure comprises 461 residues: MSISSSVAVLNVVQVSPPTAPVNNAFQDRISLTHFDLLALRAPPNQRLFFYETHLPISAFAETVIPKLRDSLSLTLQNFRPLAGTLIWSLHSDEPYIRIKDDDSVPLTIAETDADPQKLFDDPFQQETDLQQLLPPLRVSETEASLLALQITLFPSGDICLGITFHHAAQDGASLALFLKSWAHICRHGDDPPLPQNLIPIFDRDFIDDPKNIKQLFLDHLLTPLTPGGPRNRSVKPMEKPFNDRMHGSFRLTVDDIENLRRRITSLQVQNTSQEPPVRMSTVVVTCAYVLTCFVKAGLTKKHVRFILPADLRKRLQPPVPDNYYGNCVFGCTVDMSSDDLAGQDGLVVAAKTISSVVSELDANDHRTFFENFLLNNTISQEETKVGVGGSIYFSLDEKDFGWGGPKHLKNVPPWPNHIYLAERRDGDKGVDFCLMLAKQEMAEFESKFLDDLKLLEKRSC.

The active-site Proton acceptor is H167. The HXXXD motif signature appears at 167 to 171; that stretch reads HAAQD. Residue 281-282 coordinates malonyl-CoA; it reads ST. The active-site Proton acceptor is D400. The DFGWG motif motif lies at 400 to 404; it reads DFGWG.

This sequence belongs to the plant acyltransferase family. Phenolic glucoside malonyltransferase subfamily. Expressed in all tissues. Most highly expressed in the abdomen and especially in the gut.

The catalysed reaction is a flavonol 3-O-beta-D-glucoside + malonyl-CoA = a flavonol 3-O-(6-O-malonyl-beta-D-glucoside) + CoA. It carries out the reaction kaempferol 3-O-beta-D-glucoside + malonyl-CoA = kaempferol 3-O-(6-O-malonyl-beta-D-glucoside) + CoA. It catalyses the reaction quercetin 3-O-beta-D-glucoside + malonyl-CoA = quercetin 3-O-(6-O-malonyl-beta-D-glucoside) + CoA. The enzyme catalyses a flavonol 7-O-beta-D-glucoside + malonyl-CoA = a flavonol 7-O-(6-O-malonyl-beta-D-glucoside) + CoA. The catalysed reaction is (2S)-naringenin 7-O-beta-D-glucoside + malonyl-CoA = (2S)-naringenin 7-O-(6-O-malonyl-beta-D-glucoside) + CoA. It carries out the reaction kaempferol 7-O-beta-D-glucoside + malonyl-CoA = kaempferol 7-O-(6-O-malonyl-beta-D-glucoside) + CoA. It catalyses the reaction apigenin 7-O-beta-D-glucoside + malonyl-CoA = apigenin 7-O-(6-O-malonyl-beta-D-glucoside) + CoA. The enzyme catalyses rhaponticin + malonyl-CoA = 6-O-malonyl-rhaponticin + CoA. Its function is as follows. Phenolic glucoside malonyltransferase that neutralizes phenolic glycosides in host plants. Catalyzes the transfer of a malonyl group from malonyl-CoA to the phenolic glycosides, leading to their detoxification. Phenolic glycosides, which are among the most abundant plant secondary metabolites, act as plant defense compounds: they strongly affect growth, development and behavior of insect herbivores. Has malonyltransferase activity against flavonoids kaempferol 3-O-glucoside, kaempferol 7-O-glucoside, isoquercetin (quercetin 3-O-beta-D-glucopyranoside), apigetrin (apigenin 7-O-beta-D-glucoside) and prunin (naringenin 7-O-beta-D-glucoside). Also has activity toward non-flavonoid rhaponticin, but with lower efficiency. The chain is Phenolic glucoside malonyltransferase 1 from Bemisia tabaci (Sweetpotato whitefly).